Reading from the N-terminus, the 2924-residue chain is Probable polyketide synthase 6 (2924 aa).

The region spanning 11-442 (EKGVAIVGIG…GSNCCLLISE (432 aa)) is the Ketosynthase family 3 (KS3) domain. Active-site for beta-ketoacyl synthase activity residues include cysteine 181, histidine 323, and histidine 362. The interval 635 to 668 (GVNPSFILGHSLGEISASYCSGMIDLDTFCYTVY) is acyl/malonyl transferase. Serine 645 (for acyl/malonyl transferase activity) is an active-site residue. Positions 925–1047 (IDHLGLSNSY…SNFQLLDHGN (123 aa)) are N-terminal hotdog fold. The PKS/mFAS DH domain occupies 925–1210 (IDHLGLSNSY…CKSLIPIKDS (286 aa)). Residue histidine 959 is the Proton acceptor; for dehydratase activity of the active site. The tract at residues 1064 to 1210 (NLSKLTKNEL…CKSLIPIKDS (147 aa)) is C-terminal hotdog fold. Aspartate 1122 serves as the catalytic Proton donor; for dehydratase activity. The region spanning 2431 to 2508 (TGNKNIDELF…ISIKMILNSL (78 aa)) is the Carrier domain. Serine 2468 is modified (O-(pantetheine 4'-phosphoryl)serine). A helical transmembrane segment spans residues 2551-2571 (KIILLTGTTGFLGGFLLFNML).

Requires pantetheine 4'-phosphate as cofactor.

It localises to the membrane. Probable polyketide synthase. The chain is Probable polyketide synthase 6 (pks6) from Dictyostelium discoideum (Social amoeba).